The following is a 565-amino-acid chain: Urocanate hydratase (565 aa).

Residues 61–62 (GG), glutamine 139, 185–187 (GMG), glutamate 205, arginine 210, 251–252 (NA), 272–276 (QTSAH), 282–283 (YL), and tyrosine 331 each bind NAD(+). Cysteine 419 is a catalytic residue. A disordered region spans residues 453–472 (LDSGSVSSPNRETESMKDGS). Basic and acidic residues predominate over residues 463-472 (RETESMKDGS). Glycine 501 contacts NAD(+).

It belongs to the urocanase family. The cofactor is NAD(+).

It localises to the cytoplasm. It carries out the reaction 4-imidazolone-5-propanoate = trans-urocanate + H2O. Its pathway is amino-acid degradation; L-histidine degradation into L-glutamate; N-formimidoyl-L-glutamate from L-histidine: step 2/3. Functionally, catalyzes the conversion of urocanate to 4-imidazolone-5-propionate. The sequence is that of Urocanate hydratase from Pseudomonas syringae.